Reading from the N-terminus, the 329-residue chain is Putative ubiquitin thioesterase otu1 (329 aa).

The UBX-like stretch occupies residues 7 to 89 (RLKYENQSAV…ATSFSTNEPA (83 aa)). A disordered region spans residues 85 to 127 (TNEPAKPPIPNAATKPTFPPQTEISNPPAVSHQSKNTSQDPPY). Residues 115-124 (SHQSKNTSQD) are compositionally biased toward polar residues. An OTU domain is found at 135 to 254 (IALRVMPDDN…GIHYDLAALA (120 aa)). The cys-loop stretch occupies residues 140–146 (MPDDNSC). Aspartate 143 is an active-site residue. Cysteine 146 acts as the Nucleophile in catalysis. Residues 193–203 (IRKETSWGGYI) form a variable-loop region. Positions 243–247 (YSGIH) are his-loop. Isoleucine 246 is a substrate binding site. The active site involves histidine 247. Residues 272–277 (VTITPY) form an S2 site region. A C2H2-type zinc finger spans residues 299-323 (IRCTICGTGLVGEKDATAHALATGH). Histidine 323 is a catalytic residue.

It is found in the cytoplasm. The protein localises to the nucleus. It carries out the reaction Thiol-dependent hydrolysis of ester, thioester, amide, peptide and isopeptide bonds formed by the C-terminal Gly of ubiquitin (a 76-residue protein attached to proteins as an intracellular targeting signal).. Functionally, hydrolase that can remove conjugated ubiquitin from proteins and may therefore play an important regulatory role at the level of protein turnover by preventing degradation. Has a role in meiosis. The chain is Putative ubiquitin thioesterase otu1 (otu1) from Schizosaccharomyces pombe (strain 972 / ATCC 24843) (Fission yeast).